The following is a 175-amino-acid chain: Centrosomal protein 20 (175 aa).

Positions 1-104 (MATIAELKAV…IVEDANGKSV (104 aa)) are necessary and sufficient for homooligomerization and localization to centrosomes and pericentriolar satellites. The LisH domain occupies 49 to 81 (ENLLINELIREYLEFNKYKYSASVLTAEAGQPE). The segment at 137-166 (RQNLAKPSTERNQKDRIPEPGRMAGTSIEE) is disordered. Over residues 144 to 155 (STERNQKDRIPE) the composition is skewed to basic and acidic residues.

This sequence belongs to the CEP43 family. As to quaternary structure, homooligomer; probably required for localization to centrosomes.

It localises to the cell projection. Its subcellular location is the cilium. The protein localises to the cytoplasm. The protein resides in the cytoskeleton. It is found in the cilium basal body. It localises to the microtubule organizing center. Its subcellular location is the centrosome. The protein localises to the cytoplasmic granule. The protein resides in the centriolar satellite. Its function is as follows. Involved in the biogenesis of cilia. Required for the recruitment of PLK1 to centrosomes and S phase progression. The chain is Centrosomal protein 20 (CEP20) from Gallus gallus (Chicken).